Here is a 167-residue protein sequence, read N- to C-terminus: Putative pre-16S rRNA nuclease (167 aa).

This sequence belongs to the YqgF nuclease family.

The protein resides in the cytoplasm. Functionally, could be a nuclease involved in processing of the 5'-end of pre-16S rRNA. This is Putative pre-16S rRNA nuclease from Streptomyces coelicolor (strain ATCC BAA-471 / A3(2) / M145).